Here is a 430-residue protein sequence, read N- to C-terminus: Adenylosuccinate synthetase (430 aa).

Residues 12–18 (GDEGKGK) and 40–42 (GHT) contribute to the GTP site. Aspartate 13 serves as the catalytic Proton acceptor. Aspartate 13 and glycine 40 together coordinate Mg(2+). Residues 13–16 (DEGK), 38–41 (NAGH), threonine 128, arginine 142, glutamine 223, threonine 238, and arginine 302 contribute to the IMP site. Histidine 41 serves as the catalytic Proton donor. 298–304 (TTTGRPR) serves as a coordination point for substrate. GTP-binding positions include arginine 304, 330–332 (SID), and 412–414 (SVG).

It belongs to the adenylosuccinate synthetase family. As to quaternary structure, homodimer. Requires Mg(2+) as cofactor.

The protein localises to the cytoplasm. The enzyme catalyses IMP + L-aspartate + GTP = N(6)-(1,2-dicarboxyethyl)-AMP + GDP + phosphate + 2 H(+). It functions in the pathway purine metabolism; AMP biosynthesis via de novo pathway; AMP from IMP: step 1/2. Its function is as follows. Plays an important role in the de novo pathway of purine nucleotide biosynthesis. Catalyzes the first committed step in the biosynthesis of AMP from IMP. This is Adenylosuccinate synthetase from Streptococcus pyogenes serotype M5 (strain Manfredo).